The following is a 249-amino-acid chain: NAD kinase (249 aa).

The active-site Proton acceptor is the Asp49. Residues 49–50, Arg54, 115–116, Lys126, Arg143, Asp145, Ile153, 156–161, Ala180, and Gln211 each bind NAD(+); these read DG, NE, and TGYAFS.

This sequence belongs to the NAD kinase family. As to quaternary structure, homotetramer. Requires a divalent metal cation as cofactor.

Its subcellular location is the cytoplasm. The enzyme catalyses NAD(+) + ATP = ADP + NADP(+) + H(+). Its function is as follows. Involved in the regulation of the intracellular balance between NAD(H) and NADP(H), and is a key enzyme in the biosynthesis of NADP. Catalyzes specifically the phosphorylation on 2'-hydroxyl of the adenosine moiety of NAD to yield NADP. The chain is NAD kinase from Archaeoglobus fulgidus (strain ATCC 49558 / DSM 4304 / JCM 9628 / NBRC 100126 / VC-16).